Here is a 371-residue protein sequence, read N- to C-terminus: Putative transport protein YtvI (371 aa).

9 consecutive transmembrane segments (helical) span residues 6–26 (ITIF…IAAA), 30–50 (FPLT…HPVV), 65–85 (VLGV…ILVA), 168–188 (FFAL…ATFF), 225–245 (GFIK…FIGL), 256–276 (IAFL…SVFV), 283–303 (SITG…VVLI), 312–332 (ILSK…FAGF), and 334–354 (LFGF…QAFI).

Belongs to the autoinducer-2 exporter (AI-2E) (TC 2.A.86) family.

The protein localises to the cell membrane. This Bacillus subtilis (strain 168) protein is Putative transport protein YtvI (ytvI).